Consider the following 692-residue polypeptide: E3 ubiquitin-protein ligase brl1 (692 aa).

Residues Ser-302 to Lys-370 are a coiled coil. The RING-type zinc finger occupies Cys-639–Glu-679.

This sequence belongs to the BRE1 family. In terms of assembly, component of the histone H2B ubiquitin ligase complex (HULC) composed of at least brl1, brl2, rhp6 and shf1.

It localises to the nucleus. It catalyses the reaction S-ubiquitinyl-[E2 ubiquitin-conjugating enzyme]-L-cysteine + [acceptor protein]-L-lysine = [E2 ubiquitin-conjugating enzyme]-L-cysteine + N(6)-ubiquitinyl-[acceptor protein]-L-lysine.. Its pathway is protein modification; protein ubiquitination. Functionally, E3 ubiquitin-protein ligase which belongs to the histone H2B ubiquitin ligase complex (HULC) which mediates monoubiquitination of histone H2B to form H2BK123ub1. H2BK123ub1 gives a specific tag for epigenetic transcriptional activation and is also a prerequisite for H3K4me and H3K79me formation. The polypeptide is E3 ubiquitin-protein ligase brl1 (brl1) (Schizosaccharomyces pombe (strain 972 / ATCC 24843) (Fission yeast)).